The chain runs to 487 residues: N-succinylglutamate 5-semialdehyde dehydrogenase (487 aa).

221 to 226 (GSSDTG) lines the NAD(+) pocket. Catalysis depends on residues Glu244 and Cys278.

The protein belongs to the aldehyde dehydrogenase family. AstD subfamily.

It carries out the reaction N-succinyl-L-glutamate 5-semialdehyde + NAD(+) + H2O = N-succinyl-L-glutamate + NADH + 2 H(+). The protein operates within amino-acid degradation; L-arginine degradation via AST pathway; L-glutamate and succinate from L-arginine: step 4/5. In terms of biological role, catalyzes the NAD-dependent reduction of succinylglutamate semialdehyde into succinylglutamate. The polypeptide is N-succinylglutamate 5-semialdehyde dehydrogenase (Burkholderia cenocepacia (strain ATCC BAA-245 / DSM 16553 / LMG 16656 / NCTC 13227 / J2315 / CF5610) (Burkholderia cepacia (strain J2315))).